The following is a 122-amino-acid chain: uncharacterized protein (122 aa).

It is found in the mitochondrion. This is an uncharacterized protein from Arabidopsis thaliana (Mouse-ear cress).